The primary structure comprises 150 residues: MVALVQRVSEAAVEIDGAPVGAIEHGLLILLGVHEDDTRTESAWCAEKCARLRVFPDADGKMDESLLDTGGDALVVPQFTLYGDTSVGNRPSFTEAAPPDRADRLYEHFVRELEGHLGQDVPTGEFGAMMDVRLTNDGPVTLWVERRADE.

Positions 138 to 139 (GP) match the Gly-cisPro motif, important for rejection of L-amino acids motif.

It belongs to the DTD family. In terms of assembly, homodimer.

It localises to the cytoplasm. It carries out the reaction glycyl-tRNA(Ala) + H2O = tRNA(Ala) + glycine + H(+). The enzyme catalyses a D-aminoacyl-tRNA + H2O = a tRNA + a D-alpha-amino acid + H(+). In terms of biological role, an aminoacyl-tRNA editing enzyme that deacylates mischarged D-aminoacyl-tRNAs. Also deacylates mischarged glycyl-tRNA(Ala), protecting cells against glycine mischarging by AlaRS. Acts via tRNA-based rather than protein-based catalysis; rejects L-amino acids rather than detecting D-amino acids in the active site. By recycling D-aminoacyl-tRNA to D-amino acids and free tRNA molecules, this enzyme counteracts the toxicity associated with the formation of D-aminoacyl-tRNA entities in vivo and helps enforce protein L-homochirality. The sequence is that of D-aminoacyl-tRNA deacylase from Salinibacter ruber (strain DSM 13855 / M31).